Reading from the N-terminus, the 1035-residue chain is Eukaryotic translation initiation factor 3 subunit A (1035 aa).

Residues 92–121 (LKKFIELAEKKVTEAQAKADEIQSSLESAA) are a coiled coil. The region spanning 339–523 (MTKAASFVLL…GVLTFDTDVF (185 aa)) is the PCI domain. Positions 606 to 910 (ERRVIIEKKK…LRAKRAGLSE (305 aa)) form a coiled coil. Basic and acidic residues-rich tracts occupy residues 619-632 (TDALQRKQKEEETR) and 809-901 (KAAE…EARL). Disordered regions lie at residues 619–649 (TDALQRKQKEEETRKRIRTQQLQEAEKQRLA) and 809–1035 (KAAE…QQNQ). 2 stretches are compositionally biased toward low complexity: residues 943–953 (KEAAGGAAPEA) and 988–1004 (PPSQRSSQPPSRTQTPP).

Belongs to the eIF-3 subunit A family. As to quaternary structure, component of the eukaryotic translation initiation factor 3 (eIF-3) complex.

Its subcellular location is the cytoplasm. In terms of biological role, RNA-binding component of the eukaryotic translation initiation factor 3 (eIF-3) complex, which is involved in protein synthesis of a specialized repertoire of mRNAs and, together with other initiation factors, stimulates binding of mRNA and methionyl-tRNAi to the 40S ribosome. The eIF-3 complex specifically targets and initiates translation of a subset of mRNAs involved in cell proliferation. This is Eukaryotic translation initiation factor 3 subunit A (tif32) from Emericella nidulans (strain FGSC A4 / ATCC 38163 / CBS 112.46 / NRRL 194 / M139) (Aspergillus nidulans).